We begin with the raw amino-acid sequence, 413 residues long: Floricaula/leafy homolog 1 (413 aa).

Disordered stretches follow at residues 154-177 and 191-239; these read EGLS…GGTT and QRRR…RQRE. Over residues 201–210 the composition is skewed to basic and acidic residues; it reads GRERRGRASA. A compositionally biased stretch (acidic residues) spans 211–225; the sequence is EEDEETEEGQEDEWN. DNA-binding regions lie at residues 238 to 242, 307 to 314, and 378 to 381; these read REHPF, NKPKMRHY, and YVPT.

The protein belongs to the FLO/LFY family. In terms of tissue distribution, expressed in floral meristems and in indeterminate vegetative meristems.

The protein localises to the nucleus. Functionally, probable transcription factor that act to specify determinacy in the progenitor cells for both flowers and leaves. The polypeptide is Floricaula/leafy homolog 1 (FL1) (Nicotiana tabacum (Common tobacco)).